Here is a 382-residue protein sequence, read N- to C-terminus: Leucoanthocyanidin reductase (382 aa).

NADP(+) is bound by residues 19 to 25 (GGTGFIG), Arg44, and Lys52. The active-site Proton acceptor is the Lys142. An NADP(+)-binding site is contributed by Arg146.

The protein belongs to the NmrA-type oxidoreductase family. Isoflavone reductase subfamily. In terms of assembly, monomer.

It catalyses the reaction (2R,3S)-catechin + NADP(+) + H2O = (2R,3S,4S)-leucocyanidin + NADPH + H(+). Its pathway is flavonoid metabolism; proanthocyanidin biosynthesis. Catalyzes the synthesis of catechin from 3,4-cis-leucocyanidin. Also synthesizes afzelechin and gallocatechin. This chain is Leucoanthocyanidin reductase (LAR), found in Desmodium uncinatum (Silverleaf Spanish clover).